A 318-amino-acid polypeptide reads, in one-letter code: Mechanosensory protein 3 (318 aa).

LIM zinc-binding domains are found at residues 27–86 (NKCY…DYSA) and 87–152 (HRCA…PMDD). A DNA-binding region (homeobox) is located at residues 214 to 273 (RRGPRTTIRQNQLDVLNEMFSNTPKPSKHARAKLALETGLSMRVIQVWFQNRRSKERRLK).

Its subcellular location is the nucleus. Functionally, specifies differentiation of the set of six touch receptor neurons. Binds cooperatively as a heterodimer with unc-86 to sites in the mec-3 gene promoter. This chain is Mechanosensory protein 3 (mec-3), found in Caenorhabditis briggsae.